We begin with the raw amino-acid sequence, 215 residues long: Adenylate kinase (215 aa).

10-15 (GAGKGT) contacts ATP. The segment at 30-59 (STGDMLREAVAAGTELGKKVKEIIEKGLLV) is NMP. AMP-binding positions include T31, R36, 57–59 (LLV), 85–88 (GFPR), and Q92. The tract at residues 126 to 163 (SRRVCPSCGKVYNLLTIKPKNDMLCDDCNIGLIQREDD) is LID. Residue R127 participates in ATP binding. Zn(2+) is bound by residues C130 and C133. 136–137 (VY) contacts ATP. Zn(2+) is bound by residues C150 and C153. R160 and R171 together coordinate AMP. An ATP-binding site is contributed by L199.

Belongs to the adenylate kinase family. As to quaternary structure, monomer.

Its subcellular location is the cytoplasm. The enzyme catalyses AMP + ATP = 2 ADP. It participates in purine metabolism; AMP biosynthesis via salvage pathway; AMP from ADP: step 1/1. Functionally, catalyzes the reversible transfer of the terminal phosphate group between ATP and AMP. Plays an important role in cellular energy homeostasis and in adenine nucleotide metabolism. This Kosmotoga olearia (strain ATCC BAA-1733 / DSM 21960 / TBF 19.5.1) protein is Adenylate kinase.